A 329-amino-acid chain; its full sequence is DNA-directed RNA polymerase subunit alpha (329 aa).

An alpha N-terminal domain (alpha-NTD) region spans residues 1 to 234 (MQGSVTEFLK…EQLDAFVELR (234 aa)). Residues 248–329 (FDPILLRPVD…WPPASLADDL (82 aa)) are alpha C-terminal domain (alpha-CTD).

Belongs to the RNA polymerase alpha chain family. Homodimer. The RNAP catalytic core consists of 2 alpha, 1 beta, 1 beta' and 1 omega subunit. When a sigma factor is associated with the core the holoenzyme is formed, which can initiate transcription.

The catalysed reaction is RNA(n) + a ribonucleoside 5'-triphosphate = RNA(n+1) + diphosphate. In terms of biological role, DNA-dependent RNA polymerase catalyzes the transcription of DNA into RNA using the four ribonucleoside triphosphates as substrates. This Shewanella loihica (strain ATCC BAA-1088 / PV-4) protein is DNA-directed RNA polymerase subunit alpha.